The chain runs to 276 residues: Lipoyl synthase (276 aa).

7 residues coordinate [4Fe-4S] cluster: Cys-27, Cys-32, Cys-38, Cys-53, Cys-57, Cys-60, and Ser-266. Residues 39–255 form the Radical SAM core domain; it reads FGNKTATFMI…EEIGYEMGFK (217 aa).

The protein belongs to the radical SAM superfamily. Lipoyl synthase family. Requires [4Fe-4S] cluster as cofactor.

The protein resides in the cytoplasm. The enzyme catalyses [[Fe-S] cluster scaffold protein carrying a second [4Fe-4S](2+) cluster] + N(6)-octanoyl-L-lysyl-[protein] + 2 oxidized [2Fe-2S]-[ferredoxin] + 2 S-adenosyl-L-methionine + 4 H(+) = [[Fe-S] cluster scaffold protein] + N(6)-[(R)-dihydrolipoyl]-L-lysyl-[protein] + 4 Fe(3+) + 2 hydrogen sulfide + 2 5'-deoxyadenosine + 2 L-methionine + 2 reduced [2Fe-2S]-[ferredoxin]. It participates in protein modification; protein lipoylation via endogenous pathway; protein N(6)-(lipoyl)lysine from octanoyl-[acyl-carrier-protein]: step 2/2. Catalyzes the radical-mediated insertion of two sulfur atoms into the C-6 and C-8 positions of the octanoyl moiety bound to the lipoyl domains of lipoate-dependent enzymes, thereby converting the octanoylated domains into lipoylated derivatives. The chain is Lipoyl synthase from Aquifex aeolicus (strain VF5).